The following is a 176-amino-acid chain: NAD(P)H-quinone oxidoreductase subunit 6, chloroplastic (176 aa).

A run of 5 helical transmembrane segments spans residues 10–30 (FLLVFLGSGLILGALGVVLFT), 33–53 (IFSAFSLGLVLVCISLFYILA), 63–83 (LLIYVGAINVLIIFSVMFMSG), 105–125 (ISLFVSLISTILNTSWYGIIW), and 152–172 (FFLPFELISIILLVSLIGAIA).

The protein belongs to the complex I subunit 6 family. In terms of assembly, NDH is composed of at least 16 different subunits, 5 of which are encoded in the nucleus.

It is found in the plastid. The protein resides in the chloroplast thylakoid membrane. The catalysed reaction is a plastoquinone + NADH + (n+1) H(+)(in) = a plastoquinol + NAD(+) + n H(+)(out). It catalyses the reaction a plastoquinone + NADPH + (n+1) H(+)(in) = a plastoquinol + NADP(+) + n H(+)(out). Its function is as follows. NDH shuttles electrons from NAD(P)H:plastoquinone, via FMN and iron-sulfur (Fe-S) centers, to quinones in the photosynthetic chain and possibly in a chloroplast respiratory chain. The immediate electron acceptor for the enzyme in this species is believed to be plastoquinone. Couples the redox reaction to proton translocation, and thus conserves the redox energy in a proton gradient. The chain is NAD(P)H-quinone oxidoreductase subunit 6, chloroplastic (ndhG) from Spinacia oleracea (Spinach).